Here is a 447-residue protein sequence, read N- to C-terminus: 1-aminocyclopropane-1-carboxylate synthase 7 (447 aa).

E61 and Y100 together coordinate substrate. K285 bears the N6-(pyridoxal phosphate)lysine mark.

The protein belongs to the class-I pyridoxal-phosphate-dependent aminotransferase family. As to quaternary structure, homodimer and heterodimer. In vivo, the relevance of heterodimerization with other ACS enzymes is however unsure. Interacts with XBAT32. The cofactor is pyridoxal 5'-phosphate. Ubiquitinated by XBAT32. Ubiquitination probably leads to its subsequent degradation, thus controlling ethylene production. As to expression, expressed in roots.

The enzyme catalyses S-adenosyl-L-methionine = 1-aminocyclopropane-1-carboxylate + S-methyl-5'-thioadenosine + H(+). Its pathway is alkene biosynthesis; ethylene biosynthesis via S-adenosyl-L-methionine; ethylene from S-adenosyl-L-methionine: step 1/2. In terms of biological role, 1-aminocyclopropane-1-carboxylate synthase (ACS) enzymes catalyze the conversion of S-adenosyl-L-methionine (SAM) into 1-aminocyclopropane-1-carboxylate (ACC), a direct precursor of ethylene. The protein is 1-aminocyclopropane-1-carboxylate synthase 7 (ACS7) of Arabidopsis thaliana (Mouse-ear cress).